The primary structure comprises 577 residues: 5'-AMP-activated protein kinase subunit gamma (577 aa).

The interval 45–226 is disordered; it reads QSEGVGGGEL…NNNNSNSNNN (182 aa). The segment covering 58-88 has biased composition (low complexity); the sequence is NNNTTNNNTPTNTTTTTNTNTTTMNNSNNNN. Polar residues-rich tracts occupy residues 106 to 121 and 138 to 155; these read SIEQPSPSFISSSQDG and ESQSPPNGDNQILNNNNM. Residues 165–226 show a composition bias toward low complexity; that stretch reads STDNKSSTNT…NNNNSNSNNN (62 aa). 4 CBS domains span residues 279–341, 364–426, 438–499, and 517–574; these read VIPI…KKPK, ERPS…QLPE, IGTF…LSPS, and QRPE…DVKS.

The protein belongs to the 5'-AMP-activated protein kinase gamma subunit family.

Its function is as follows. AMPK may be responsible for the regulation of fatty acid synthesis by phosphorylation of acetyl-CoA carboxylase. The sequence is that of 5'-AMP-activated protein kinase subunit gamma (prkag) from Dictyostelium discoideum (Social amoeba).